Consider the following 473-residue polypeptide: MAPPAARLALLSAAALTLAARPAPSPGLGPECFTANGADYRGTQNWTALQGGKPCLFWNETFQHPYNTLKYPNGEGGLGEHNYCRNPDGDVSPWCYVAEHEDGVYWKYCEIPACQMPGNLGCYKDHGNPPPLTGTSKTSNKLTIQTCISFCRSQRFKFAGMESGYACFCGNNPDYWKYGEAASTECNSVCFGDHTQPCGGDGRIILFDTLVGACGGNYSAMSSVVYSPDFPDTYATGRVCYWTIRVPGASHIHFSFPLFDIRDSADMVELLDGYTHRVLARFHGRSRPPLSFNVSLDFVILYFFSDRINQAQGFAVLYQAVKEELPQERPAVNQTVAEVITEQANLSVSAARSSKVLYVITTSPSHPPQTVPGSNSWAPPMGAGSHRVEGWTVYGLATLLILTVTAIVAKILLHVTFKSHRVPASGDLRDCHQPGTSGEIWSIFYKPSTSISIFKKKLKGQSQQDDRNPLVSD.

The N-terminal stretch at 1–19 is a signal peptide; it reads MAPPAARLALLSAAALTLA. The Extracellular segment spans residues 21 to 392; that stretch reads RPAPSPGLGP…AGSHRVEGWT (372 aa). The 84-residue stretch at 31-114 folds into the Kringle domain; the sequence is ECFTANGADY…YWKYCEIPAC (84 aa). Disulfide bonds link Cys-32-Cys-114, Cys-55-Cys-95, Cys-84-Cys-109, Cys-122-Cys-186, Cys-147-Cys-167, Cys-151-Cys-169, Cys-190-Cys-198, and Cys-214-Cys-240. N-linked (GlcNAc...) asparagine glycosylation is found at Asn-45 and Asn-59. A WSC domain is found at 116-210; that stretch reads MPGNLGCYKD…DGRIILFDTL (95 aa). The region spanning 214–321 is the CUB domain; sequence CGGNYSAMSS…QGFAVLYQAV (108 aa). 4 N-linked (GlcNAc...) asparagine glycosylation sites follow: Asn-217, Asn-293, Asn-333, and Asn-345. The helical transmembrane segment at 393–413 threads the bilayer; it reads VYGLATLLILTVTAIVAKILL. The Cytoplasmic segment spans residues 414–473; sequence HVTFKSHRVPASGDLRDCHQPGTSGEIWSIFYKPSTSISIFKKKLKGQSQQDDRNPLVSD. Residues 414-473 form an essential for apoptotic activity region; that stretch reads HVTFKSHRVPASGDLRDCHQPGTSGEIWSIFYKPSTSISIFKKKLKGQSQQDDRNPLVSD.

In terms of assembly, forms a ternary complex with DKK1 and LRP6. Interacts with LRP6 in a DKK1-dependent manner. Interacts with DKK1 and RSPO1 (via FU repeats).

It is found in the cell membrane. In terms of biological role, receptor for Dickkopf proteins. Cooperates with DKK1/2 to inhibit Wnt/beta-catenin signaling by promoting the endocytosis of Wnt receptors LRP5 and LRP6. In the absence of DKK1, potentiates Wnt-beta-catenin signaling by maintaining LRP5 or LRP6 at the cell membrane. Can trigger apoptosis in a Wnt-independent manner and this apoptotic activity is inhibited upon binding of the ligand DKK1. Plays a role in limb development; attenuates Wnt signaling in the developing limb to allow normal limb patterning and can also negatively regulate bone formation. Modulates cell fate decisions in the developing cochlea with an inhibitory role in hair cell fate specification. This is Kremen protein 1 (KREMEN1) from Homo sapiens (Human).